The following is a 451-amino-acid chain: MINNINRIKKTYNTFLNVNKLRYSTSIISSNILENDNNNIDDFEQVLKSTKVRMPTSALLLPKKPKVCIGMSGGVDSTITAKLLKLQGFDVTGVFIKSWDEVEDTGRCQGERDWKDALEASNFLDIPMYKADFVKDYWNRVFVDFLKDYKNGLTPNPDVWCNREIKFDLFFDFAKENFGVDYIATGHYSNLYYGEENVGDNNNNNLQLHRAIDKNKDQTFFLCMTKGERLKQAIFPIGGFTKENIVSFAKTIPNFSKITSKKSSRGICFIGKRPLPDFLSQYMTLKPGDFFDISTNSFIKGKKHKGSVCYTMGQKANIDSLSERYFIVRSDIERNIVYVCPESQFDQFSLYYEFNTHSFNWINEIPTEVKSEQGFKGRGICRHRGDVVNLTIKDTGKTSPIDGSVIYSVNLDQPLRSVASGQILCLFDRNTDRCFGGGVINSSPLYNPTQF.

70–77 (GMSGGVDS) is a binding site for ATP. Residues 156–158 (NPD) form an interaction with target base in tRNA region. Cys-161 functions as the Nucleophile in the catalytic mechanism. A disulfide bond links Cys-161 and Cys-268. Gly-186 is a binding site for ATP. Positions 216 to 218 (KDQ) are interaction with tRNA. Cys-268 serves as the catalytic Cysteine persulfide intermediate. Positions 386-387 (DV) are interaction with tRNA.

This sequence belongs to the MnmA/TRMU family.

The protein resides in the mitochondrion. The enzyme catalyses 5-taurinomethyluridine(34) in tRNA + S-sulfanyl-L-cysteinyl-[protein] + AH2 + ATP = 5-taurinomethyl-2-thiouridine(34) in tRNA + L-cysteinyl-[protein] + A + AMP + diphosphate + H(+). Its function is as follows. Catalyzes the 2-thiolation of uridine at the wobble position (U34) of mitochondrial tRNA(Lys), tRNA(Glu) and tRNA(Gln). Required for the formation of 5-taurinomethyl-2-thiouridine (tm5s2U) of mitochondrial tRNA(Lys), tRNA(Glu), and tRNA(Gln) at the wobble position. ATP is required to activate the C2 atom of the wobble base. In Dictyostelium discoideum (Social amoeba), this protein is Mitochondrial tRNA-specific 2-thiouridylase 1 (trmu).